We begin with the raw amino-acid sequence, 620 residues long: Leucine-rich repeat and immunoglobulin-like domain-containing nogo receptor-interacting protein 1 (620 aa).

Residues 1-41 (MQVSKRMLAGGVRSMPSPLLACWQPILLLVLGSVLSGSATG) form the signal peptide. Intrachain disulfides connect cysteine 42–cysteine 48 and cysteine 46–cysteine 57. In terms of domain architecture, LRRNT spans 42–71 (CPPRCECSAQDRAVLCHRKRFVAVPEGIPT). Over 42–561 (CPPRCECSAQ…FDIKTLIIAT (520 aa)) the chain is Extracellular. 11 LRR repeats span residues 72-93 (ETRL…EFAS), 96-117 (HLEE…AFNN), 120-141 (NLRT…VFTG), 144-165 (NLTK…MFQD), 168-189 (NLKS…AFSG), 192-213 (SLEQ…ALSH), 216-237 (GLIV…SFKR), 264-285 (NLTS…AVRH), 288-309 (YLRF…MLHE), 312-333 (RLQE…AFRG), and 336-357 (YLRV…VFHS). N-linked (GlcNAc...) asparagine glycosylation is present at asparagine 144. N-linked (GlcNAc...) asparagine glycosylation occurs at asparagine 202. N-linked (GlcNAc...) asparagine glycosylation is found at asparagine 264, asparagine 274, and asparagine 293. Asparagine 341 carries N-linked (GlcNAc...) asparagine glycosylation. An LRRCT domain is found at 369–423 (NPLACDCRLLWVFRRRWRLNFNRQQPTCATPEFVQGKEFKDFPDVLLPNYFTCRR). 3 disulfides stabilise this stretch: cysteine 373/cysteine 396, cysteine 375/cysteine 421, and cysteine 446/cysteine 497. An Ig-like C2-type domain is found at 411–513 (PDVLLPNYFT…GNDSMPAHLH (103 aa)). N-linked (GlcNAc...) asparagine glycosylation is found at asparagine 492, asparagine 505, asparagine 526, and asparagine 542. A helical transmembrane segment spans residues 562–582 (TMGFISFLGVVLFCLVLLFLW). Residues 583–620 (SRGKGNTKHNIEIEYVPRKSDAGISSADAPRKFNMKMI) lie on the Cytoplasmic side of the membrane. Serine 602 carries the post-translational modification Phosphoserine.

Homotetramer. Forms a ternary complex with RTN4R/NGFR and RTN4R/TNFRSF19. Interacts with NGRF and MYT1L. Interacts with RTN4R. N-glycosylated. Contains predominantly high-mannose glycans. Expressed exclusively in the central nervous system. Highest level in the in amygdala, hippocampus, thalamus and cerebral cortex. In the rest of the brain a basal expression seems to be always present. Up-regulated in substantia nigra neurons from Parkinson disease patients.

It is found in the cell membrane. Functional component of the Nogo receptor signaling complex (RTN4R/NGFR) in RhoA activation responsible for some inhibition of axonal regeneration by myelin-associated factors. Is also an important negative regulator of oligodentrocyte differentiation and axonal myelination. Acts in conjunction with RTN4 and RTN4R in regulating neuronal precursor cell motility during cortical development. In Homo sapiens (Human), this protein is Leucine-rich repeat and immunoglobulin-like domain-containing nogo receptor-interacting protein 1 (LINGO1).